Consider the following 267-residue polypeptide: 4-hydroxy-tetrahydrodipicolinate reductase (267 aa).

Residues 8-13 (GAAGRM) and Asp34 each bind NAD(+). Arg35 is an NADP(+) binding site. NAD(+)-binding positions include 98–100 (GTT) and 122–125 (AANF). The active-site Proton donor/acceptor is His155. Residue His156 participates in (S)-2,3,4,5-tetrahydrodipicolinate binding. Lys159 serves as the catalytic Proton donor. 165–166 (GT) is a binding site for (S)-2,3,4,5-tetrahydrodipicolinate.

It belongs to the DapB family.

It is found in the cytoplasm. The catalysed reaction is (S)-2,3,4,5-tetrahydrodipicolinate + NAD(+) + H2O = (2S,4S)-4-hydroxy-2,3,4,5-tetrahydrodipicolinate + NADH + H(+). The enzyme catalyses (S)-2,3,4,5-tetrahydrodipicolinate + NADP(+) + H2O = (2S,4S)-4-hydroxy-2,3,4,5-tetrahydrodipicolinate + NADPH + H(+). The protein operates within amino-acid biosynthesis; L-lysine biosynthesis via DAP pathway; (S)-tetrahydrodipicolinate from L-aspartate: step 4/4. Its function is as follows. Catalyzes the conversion of 4-hydroxy-tetrahydrodipicolinate (HTPA) to tetrahydrodipicolinate. The protein is 4-hydroxy-tetrahydrodipicolinate reductase of Pseudomonas savastanoi pv. phaseolicola (strain 1448A / Race 6) (Pseudomonas syringae pv. phaseolicola (strain 1448A / Race 6)).